The primary structure comprises 645 residues: Zinc finger protein 64 (645 aa).

C2H2-type zinc fingers lie at residues 175-197, 203-225, and 231-253; these read HKCE…MRCH, YKCK…LRIH, and FKCQ…LRSH. A Glycyl lysine isopeptide (Lys-Gly) (interchain with G-Cter in SUMO2) cross-link involves residue glutamate 286. Residues 299–324 form a C2H2-type 4; atypical zinc finger; it reads FNCCYPGCHFKTVHGMKDLDRHLRIH. 9 consecutive C2H2-type zinc fingers follow at residues 330–352, 358–380, 386–408, 414–436, 442–465, 467–489, 495–517, 523–546, and 580–602; these read HKCE…MRCH, HKCH…LRIH, YKCQ…LRSH, FQCW…MIVH, FKCE…RIKH, FKCL…SRLH, EKCP…SRVH, FKCD…DKVH, and FRCE…KKQH. A Glycyl lysine isopeptide (Lys-Gly) (interchain with G-Cter in SUMO2) cross-link involves residue asparagine 397. 2 stretches are compositionally biased toward basic and acidic residues: residues 543-554 and 600-610; these read DKVHRDEAKTEN and KQHSDQSENKN. Disordered stretches follow at residues 543–567 and 600–645; these read DKVH…REGS and KQHS…SQDL. Valine 545 is subject to Phosphoserine. Positions 622 to 631 are enriched in polar residues; it reads ASGQLSTLVS.

Belongs to the krueppel C2H2-type zinc-finger protein family. Interacts with ZNF70; this interaction promote the transactivation of the HES1 gene. Interacts with NOTCH1.

It is found in the nucleus. In terms of biological role, may be involved in the regulation of mesenchymal cell differentiation through transactivation of NOTCH1 target genes. The chain is Zinc finger protein 64 from Homo sapiens (Human).